Reading from the N-terminus, the 449-residue chain is Bifunctional protein GlmU (449 aa).

The pyrophosphorylase stretch occupies residues methionine 1 to arginine 225. UDP-N-acetyl-alpha-D-glucosamine contacts are provided by residues leucine 7–glycine 10, lysine 21, glutamine 73, and glycine 78–threonine 79. Aspartate 103 serves as a coordination point for Mg(2+). Positions 140, 154, 169, and 223 each coordinate UDP-N-acetyl-alpha-D-glucosamine. Asparagine 223 contributes to the Mg(2+) binding site. Positions isoleucine 226–asparagine 246 are linker. An N-acetyltransferase region spans residues glycine 247 to proline 449. UDP-N-acetyl-alpha-D-glucosamine-binding residues include arginine 328 and lysine 346. Residue histidine 358 is the Proton acceptor of the active site. The UDP-N-acetyl-alpha-D-glucosamine site is built by tyrosine 361 and asparagine 372. Alanine 375, alanine 418, and arginine 435 together coordinate acetyl-CoA.

This sequence in the N-terminal section; belongs to the N-acetylglucosamine-1-phosphate uridyltransferase family. The protein in the C-terminal section; belongs to the transferase hexapeptide repeat family. Homotrimer. Mg(2+) is required as a cofactor.

The protein localises to the cytoplasm. It carries out the reaction alpha-D-glucosamine 1-phosphate + acetyl-CoA = N-acetyl-alpha-D-glucosamine 1-phosphate + CoA + H(+). The enzyme catalyses N-acetyl-alpha-D-glucosamine 1-phosphate + UTP + H(+) = UDP-N-acetyl-alpha-D-glucosamine + diphosphate. The protein operates within nucleotide-sugar biosynthesis; UDP-N-acetyl-alpha-D-glucosamine biosynthesis; N-acetyl-alpha-D-glucosamine 1-phosphate from alpha-D-glucosamine 6-phosphate (route II): step 2/2. Its pathway is nucleotide-sugar biosynthesis; UDP-N-acetyl-alpha-D-glucosamine biosynthesis; UDP-N-acetyl-alpha-D-glucosamine from N-acetyl-alpha-D-glucosamine 1-phosphate: step 1/1. It participates in bacterial outer membrane biogenesis; LPS lipid A biosynthesis. Functionally, catalyzes the last two sequential reactions in the de novo biosynthetic pathway for UDP-N-acetylglucosamine (UDP-GlcNAc). The C-terminal domain catalyzes the transfer of acetyl group from acetyl coenzyme A to glucosamine-1-phosphate (GlcN-1-P) to produce N-acetylglucosamine-1-phosphate (GlcNAc-1-P), which is converted into UDP-GlcNAc by the transfer of uridine 5-monophosphate (from uridine 5-triphosphate), a reaction catalyzed by the N-terminal domain. This Prochlorococcus marinus (strain MIT 9312) protein is Bifunctional protein GlmU.